The sequence spans 904 residues: Protein translocase subunit SecA (904 aa).

ATP-binding positions include Gln87, 105 to 109, and Asp512; that span reads GEGKT. The segment at 851 to 870 is disordered; sequence LARQQQLSHQTDNSALMSEE. Residues Cys888, Cys890, Cys899, and His900 each contribute to the Zn(2+) site.

It belongs to the SecA family. Monomer and homodimer. Part of the essential Sec protein translocation apparatus which comprises SecA, SecYEG and auxiliary proteins SecDF-YajC and YidC. The cofactor is Zn(2+).

It is found in the cell inner membrane. The protein resides in the cytoplasm. The enzyme catalyses ATP + H2O + cellular proteinSide 1 = ADP + phosphate + cellular proteinSide 2.. Part of the Sec protein translocase complex. Interacts with the SecYEG preprotein conducting channel. Has a central role in coupling the hydrolysis of ATP to the transfer of proteins into and across the cell membrane, serving both as a receptor for the preprotein-SecB complex and as an ATP-driven molecular motor driving the stepwise translocation of polypeptide chains across the membrane. This chain is Protein translocase subunit SecA, found in Yersinia pseudotuberculosis serotype O:1b (strain IP 31758).